The following is a 92-amino-acid chain: RNA-binding protein Hfq (92 aa).

The Sm domain occupies 9-68 (DPFLNALRRERVPVSVYLVNGIKLQGTIESFDQFVVLLRNTVSQMVYKHAISTVVPARNV). The segment at 73 to 92 (GGGYVQSNEGNQAEDDDVEQ) is disordered.

This sequence belongs to the Hfq family. Homohexamer.

In terms of biological role, RNA chaperone that binds small regulatory RNA (sRNAs) and mRNAs to facilitate mRNA translational regulation in response to envelope stress, environmental stress and changes in metabolite concentrations. Also binds with high specificity to tRNAs. The sequence is that of RNA-binding protein Hfq from Xanthomonas axonopodis pv. citri (strain 306).